Reading from the N-terminus, the 268-residue chain is 3-deoxy-manno-octulosonate cytidylyltransferase (268 aa).

This sequence belongs to the KdsB family.

The protein resides in the cytoplasm. The catalysed reaction is 3-deoxy-alpha-D-manno-oct-2-ulosonate + CTP = CMP-3-deoxy-beta-D-manno-octulosonate + diphosphate. The protein operates within nucleotide-sugar biosynthesis; CMP-3-deoxy-D-manno-octulosonate biosynthesis; CMP-3-deoxy-D-manno-octulosonate from 3-deoxy-D-manno-octulosonate and CTP: step 1/1. Its pathway is bacterial outer membrane biogenesis; lipopolysaccharide biosynthesis. Functionally, activates KDO (a required 8-carbon sugar) for incorporation into bacterial lipopolysaccharide in Gram-negative bacteria. The chain is 3-deoxy-manno-octulosonate cytidylyltransferase from Ralstonia nicotianae (strain ATCC BAA-1114 / GMI1000) (Ralstonia solanacearum).